We begin with the raw amino-acid sequence, 1076 residues long: Zinc-regulated protein 8 (1076 aa).

Positions 1-11 (MRSFIKAHKKS) are enriched in basic residues. 4 disordered regions span residues 1 to 66 (MRSF…PGFE), 85 to 162 (SNLN…RTTD), 190 to 223 (PASP…TSPS), and 234 to 253 (KNKG…SSKK). Polar residues predominate over residues 23-34 (NFSGNTNNSSQR). Over residues 93–106 (STPTTSTNQTTSNS) the composition is skewed to low complexity. A compositionally biased stretch (polar residues) spans 107–117 (FVLQNPPTKNT). A compositionally biased stretch (pro residues) spans 118-128 (GPPPPLPPPLF). 2 stretches are compositionally biased toward polar residues: residues 193–206 (PASN…SKQF) and 214–223 (ENLTSTTSPS). Ser-275 and Ser-354 each carry phosphoserine. Disordered stretches follow at residues 357–450 (IRHG…DDES), 534–557 (LSDD…ESDN), and 566–585 (GKET…SLGE). Over residues 362-378 (LQSSPSKVNKNDSQNET) the composition is skewed to polar residues. A phosphoserine mark is found at Ser-403 and Ser-407. Residues 408–418 (VNEKETHKAND) are compositionally biased toward basic and acidic residues. Positions 419-450 (CNDESSENGDGDNDHDDDYDDDDDDDDDDDES) are enriched in acidic residues. A compositionally biased stretch (basic and acidic residues) spans 576–585 (GHHDDASLGE). A phosphoserine mark is found at Ser-632 and Ser-676. 5 disordered regions span residues 658 to 701 (NIIR…KPTV), 713 to 762 (SASD…PHSQ), 909 to 931 (RRTL…FSSV), 1000 to 1020 (HNVG…QISN), and 1042 to 1076 (PTNS…PKRA). Polar residues-rich tracts occupy residues 690–701 (LTGTTGSTKPTV) and 739–748 (QVSLQSSLYE).

This sequence belongs to the ZRG8 family. As to quaternary structure, interacts with BUD27, GIS1 and SSD1.

It is found in the cytoplasm. The protein localises to the bud. It localises to the bud neck. Its subcellular location is the bud tip. Its function is as follows. Involved in the integrity functions of RAM, a conserved signaling network that regulates maintenance of polarized growth and daughter-cell-specific transcription. The protein is Zinc-regulated protein 8 (ZRG8) of Saccharomyces cerevisiae (strain ATCC 204508 / S288c) (Baker's yeast).